We begin with the raw amino-acid sequence, 916 residues long: Extracellular signal-regulated kinase 7 (916 aa).

Residues 25-319 (FDVRKRMGKG…AKEAIRHPYV (295 aa)) enclose the Protein kinase domain. ATP-binding positions include 31-39 (MGKGAYGIV) and K54. The active-site Proton acceptor is the D149. Polar residues-rich tracts occupy residues 364–376 (CSNR…TPSS) and 390–403 (QART…TTSP). 6 disordered regions span residues 364–419 (CSNR…TQSR), 452–477 (PPAA…KSVP), 588–608 (PSET…QMKR), 711–742 (KKLQ…SQNY), 792–813 (ELNP…PGRD), and 883–916 (CRHR…PESN). 3 stretches are compositionally biased toward basic and acidic residues: residues 590–608 (ETEH…QMKR), 715–730 (RSKE…RRAL), and 800–811 (GGRDSGSEHSPG). The span at 883–892 (CRHRHHKPNH) shows a compositional bias: basic residues. Residues 894-903 (APYDHMRPTE) are compositionally biased toward basic and acidic residues.

The protein belongs to the protein kinase superfamily. Ser/Thr protein kinase family.

The enzyme catalyses L-seryl-[protein] + ATP = O-phospho-L-seryl-[protein] + ADP + H(+). It carries out the reaction L-threonyl-[protein] + ATP = O-phospho-L-threonyl-[protein] + ADP + H(+). Atypical MAPK protein that regulates protein secretion in a kinase activity-dependent manner. In response to starvation regulates protein secretion by mediating transitional endoplasmic reticulum site disassembly. Mediates inhibition of insulin-like peptide secretion upon disturbed ribosome biogenesis and acts as a downstream effector of TP53. In Drosophila melanogaster (Fruit fly), this protein is Extracellular signal-regulated kinase 7.